Reading from the N-terminus, the 692-residue chain is Transcription factor steA (692 aa).

The DNA-binding element occupies 56–165 (DQLIRRFLLP…SVPHDRLFLD (110 aa)). 2 disordered regions span residues 406-507 (SPTY…EQSS) and 519-540 (LPANGTVESGAPNGVGHKSDRY). A compositionally biased stretch (polar residues) spans 470–482 (RSVNSTYTATLPQ). C2H2-type zinc fingers lie at residues 564–588 (HSCPIPSCGRLFKRLEHLKRHVRTH) and 594–616 (YPCPYCNKAFSRSDNLAQHRRIH). Residues 618 to 665 (AQQDGQPLVHEDDLENDDNESVSHDEDESPSESVHPAVPGVHGMTSMP) are disordered. Positions 629 to 647 (DDLENDDNESVSHDEDESP) are enriched in acidic residues.

It belongs to the STE12 transcription factor family.

The protein localises to the nucleus. Its function is as follows. Transcription factor involved in sexual reproduction. Required for cleistothecial development and ascosporogenesis. Not required for asexual reproduction (conidiation). May act to repress medA expression. This chain is Transcription factor steA (steA), found in Emericella nidulans (strain FGSC A4 / ATCC 38163 / CBS 112.46 / NRRL 194 / M139) (Aspergillus nidulans).